A 473-amino-acid polypeptide reads, in one-letter code: Lactate utilization protein B (473 aa).

4Fe-4S ferredoxin-type domains are found at residues 303 to 333 (GTAF…GHSY) and 352 to 381 (YDDY…LHEL). Positions 312, 315, 318, 322, 365, 368, and 372 each coordinate [4Fe-4S] cluster.

The protein belongs to the LutB/YkgF family.

In terms of biological role, is involved in L-lactate degradation and allows cells to grow with lactate as the sole carbon source. Has probably a role as an electron transporter during oxidation of L-lactate. The sequence is that of Lactate utilization protein B from Bacillus pumilus (strain SAFR-032).